A 480-amino-acid polypeptide reads, in one-letter code: Immune evasion protein OPG047 (480 aa).

A BTB domain is found at 10-90 (CKNILALSMT…SYTGKVYIDS (81 aa)). One can recognise a BACK domain in the interval 125–223 (CVECYMMGIE…NYLSPRGINN (99 aa)). Kelch repeat units follow at residues 273 to 319 (VVYL…PANN), 320 to 363 (KLYV…SINN), 365 to 408 (IYVM…VFGR), 410 to 447 (LFLVGRNAEFYCESSNTWTLIDDPIYPRDNPELIIVDN), and 448 to 480 (KLLLIGGFYRESYIDTIEVYNHHTYSWNIWDGK).

Belongs to the orthopoxvirus OPG047 family.

Its function is as follows. Might have a role in the suppression of host immune response. This Vaccinia virus (strain Western Reserve) (VACV) protein is Immune evasion protein OPG047 (OPG047).